The sequence spans 552 residues: MMDDKDLEAEIHPLKNEDKKSQENLGNLPKTEDNLKNKPVPSRLSRCRTVAFFLSLFICLFVVFVLSFIIPCPDRPSSEDKWRLDYDYAVTYDFLALGDVDRDEVQDVLFLYKNTNSSNNSTRSCADEGFSTPCTFMAAVSGTNGTVLWERPLAQDVAHVKCAVPQTRDSKVSSACVLVGRLGSFMAVNFFTGETLWSHPRSFSGNASILSPLLQVPDIDGDGAPDLLMLSREGQEVSGALYSGSTGYQIGHRGSLGVDGDGVALLHVTRTGAQYILLPCASALCGVSVKGLYKRITGRDDHFKEDPSWENMLNRSAHRRLLHSSGAVRYLMNVPGKTGQDLLLVSSEDCKLLDGQDLVPRWTLGATQVLRKPILGHYKPDTLAVVIENGTSLDRQILLLDLSTGSMLWSQPLPSLPGAPPSTSLMTADHRSAFFFWGLHDPVSANEMDPQDTQHSLYMFHPTLPGILLELANVSANIVAFDAVLFEPSRHAAYVLLTGPASSDVPGLVSLTKHRVRDLVPGSRVIHLSEGSSDSDQAIRDRFSRLRYRSEV.

The segment at 1 to 40 (MMDDKDLEAEIHPLKNEDKKSQENLGNLPKTEDNLKNKPV) is disordered. Over 1–49 (MMDDKDLEAEIHPLKNEDKKSQENLGNLPKTEDNLKNKPVPSRLSRCRT) the chain is Cytoplasmic. The span at 8–22 (EAEIHPLKNEDKKSQ) shows a compositional bias: basic and acidic residues. The residue at position 21 (serine 21) is a Phosphoserine. A helical; Signal-anchor for type II membrane protein transmembrane segment spans residues 50-70 (VAFFLSLFICLFVVFVLSFII). Topologically, residues 71 to 552 (PCPDRPSSED…FSRLRYRSEV (482 aa)) are extracellular. Residues asparagine 116, asparagine 119, asparagine 314, and asparagine 473 are each glycosylated (N-linked (GlcNAc...) asparagine).

This sequence belongs to the FAM234 family.

It localises to the membrane. This chain is Protein FAM234A (Fam234a), found in Rattus norvegicus (Rat).